We begin with the raw amino-acid sequence, 635 residues long: Threonine--tRNA ligase (635 aa).

Positions Met1–Thr58 constitute a TGS domain. The catalytic stretch occupies residues Asp237–Pro528. Zn(2+)-binding residues include Cys328, His379, and His505.

This sequence belongs to the class-II aminoacyl-tRNA synthetase family. Homodimer. Zn(2+) serves as cofactor.

Its subcellular location is the cytoplasm. The enzyme catalyses tRNA(Thr) + L-threonine + ATP = L-threonyl-tRNA(Thr) + AMP + diphosphate + H(+). Catalyzes the attachment of threonine to tRNA(Thr) in a two-step reaction: L-threonine is first activated by ATP to form Thr-AMP and then transferred to the acceptor end of tRNA(Thr). Also edits incorrectly charged L-seryl-tRNA(Thr). The protein is Threonine--tRNA ligase of Chlamydia caviae (strain ATCC VR-813 / DSM 19441 / 03DC25 / GPIC) (Chlamydophila caviae).